The chain runs to 252 residues: Phosphosulfolactate synthase (252 aa).

Belongs to the phosphosulfolactate synthase family.

The catalysed reaction is (2R)-O-phospho-3-sulfolactate = phosphoenolpyruvate + sulfite + H(+). Functionally, catalyzes the addition of sulfite to phosphoenolpyruvate (PEP) to yield (2R)-phospho-3-sulfolactate (PSL). Is probably involved in the biosynthesis of L-sulfolactate, which is a major constituent of sporulating cells and mature spores. The chain is Phosphosulfolactate synthase (yitD) from Bacillus subtilis (strain 168).